The following is a 205-amino-acid chain: Large ribosomal subunit protein uL4 (205 aa).

This sequence belongs to the universal ribosomal protein uL4 family. As to quaternary structure, part of the 50S ribosomal subunit.

Its function is as follows. One of the primary rRNA binding proteins, this protein initially binds near the 5'-end of the 23S rRNA. It is important during the early stages of 50S assembly. It makes multiple contacts with different domains of the 23S rRNA in the assembled 50S subunit and ribosome. In terms of biological role, forms part of the polypeptide exit tunnel. This is Large ribosomal subunit protein uL4 from Dinoroseobacter shibae (strain DSM 16493 / NCIMB 14021 / DFL 12).